Consider the following 831-residue polypeptide: MPLEMEPKMSKLAFGCQRSSTSDDDSGCALEEYAWVPPGLRPEQIQLYFACLPEEKVPYVNSPGEKHRIKQLLYQLPPHDNEVRYCQSLSEEEKKELQVFSAQRKKEALGRGTIKLLSRAVMHAVCEQCGLKINGGEVAVFASRAGPGVCWHPSCFVCFTCNELLVDLIYFYQDGKIHCGRHHAELLKPRCSACDEIIFADECTEAEGRHWHMKHFCCLECETVLGGQRYIMKDGRPFCCGCFESLYAEYCETCGEHIGVDHAQMTYDGQHWHATEACFSCAQCKASLLGCPFLPKQGQIYCSKTCSLGEDVHASDSSDSAFQSARSRDSRRSVRMGKSSRSADQCRQSLLLSPALNYKFPGLSGNADDTLSRKLDDLSLSRQGTSFASEEFWKGRVEQETPEDPEEWADHEDYMTQLLLKFGDKSLFQPQPNEMDIRASEHWISDNMVKSKTELKQNNQSLASKKYQSDMYWAQSQDGLGDSAYGSHPGPASSRRLQELELDHGASGYNHDETQWYEDSLECLSDLKPEQSVRDSMDSLALSNITGASVDGENKPRPSLYSLQNFEEMETEDCEKMSNMGTLNSSMLHRSAESLKSLSSELCPEKILPEEKPVHLPVLRRSKSQSRPQQVKFSDDVIDNGNYDIEIRQPPMSERTRRRVYNFEERGSRSHHHRRRRSRKSRSDNALNLVTERKYSPKDRLRLYTPDNYEKFIQNKSAREIQAYIQNADLYGQYAHATSDYGLQNPGMNRFLGLYGEDDDSWCSSSSSSSDSEEEGYFLGQPIPQPRPQRFAYYTDDLSSPPSALPTPQFGQRTTKSKKKKGHKGKNCIIS.

A PET domain is found at 14-122; that stretch reads FGCQRSSTSD…TIKLLSRAVM (109 aa). 3 consecutive LIM zinc-binding domains span residues 124–189, 189–249, and 249–313; these read AVCE…LLKP, PRCS…LYAE, and EYCE…EDVH. The interval 313 to 342 is disordered; that stretch reads HASDSSDSAFQSARSRDSRRSVRMGKSSRS. Residues Ser-315, Ser-591, and Ser-594 each carry the phosphoserine modification. 2 disordered regions span residues 663 to 688 and 763 to 831; these read FEER…NALN and CSSS…CIIS. Over residues 669–680 the composition is skewed to basic residues; it reads RSHHHRRRRSRK. Ser-683 bears the Phosphoserine mark. The segment covering 815-831 has biased composition (basic residues); that stretch reads TKSKKKKGHKGKNCIIS. At Cys-828 the chain carries Cysteine methyl ester. The S-farnesyl cysteine moiety is linked to residue Cys-828. The propeptide at 829 to 831 is removed in mature form; the sequence is IIS.

It belongs to the prickle / espinas / testin family. As to quaternary structure, interacts with REST. As to expression, expressed at highest levels in placenta and at lower levels in lung, liver, kidney and pancreas. Expressed in thalamus, hippocampus, cerebral cortex, and cerebellum (in neurons rather than glia).

The protein localises to the nucleus membrane. Its subcellular location is the cytoplasm. The protein resides in the cytosol. Its function is as follows. Involved in the planar cell polarity pathway that controls convergent extension during gastrulation and neural tube closure. Convergent extension is a complex morphogenetic process during which cells elongate, move mediolaterally, and intercalate between neighboring cells, leading to convergence toward the mediolateral axis and extension along the anteroposterior axis. Necessary for nuclear localization of REST. May serve as nuclear receptor. The protein is Prickle-like protein 1 (PRICKLE1) of Homo sapiens (Human).